Reading from the N-terminus, the 204-residue chain is Molybdenum cofactor guanylyltransferase (204 aa).

Residues 12–14 (LAG), K25, N53, D71, and D101 contribute to the GTP site. Residue D101 coordinates Mg(2+).

The protein belongs to the MobA family. In terms of assembly, monomer. Requires Mg(2+) as cofactor.

The protein resides in the cytoplasm. It catalyses the reaction Mo-molybdopterin + GTP + H(+) = Mo-molybdopterin guanine dinucleotide + diphosphate. Functionally, transfers a GMP moiety from GTP to Mo-molybdopterin (Mo-MPT) cofactor (Moco or molybdenum cofactor) to form Mo-molybdopterin guanine dinucleotide (Mo-MGD) cofactor. The sequence is that of Molybdenum cofactor guanylyltransferase from Ralstonia nicotianae (strain ATCC BAA-1114 / GMI1000) (Ralstonia solanacearum).